The sequence spans 433 residues: MPDYLGADQRKTKEEEKEDKPIRSLDEGDIALLKTYGQSTYSRQIKQVEDDIQQLLKKINELTGIKESDTGLAPPALWDLAADKQTLQSEQPLQVARCTKIINADSEDPKYIINVKQFAKFVVDLSDQVAPTDIEEGMRVGVDRNKYQIHIPLPPKIDPTVTMMQVEEKPDVTYSDVGGCKEQIEKLREVVETPLLHPERFVNLGIEPPKGVLLFGPPGTGKTLCARAVANRTDACFIRVIGSELVQKYVGEGARMVRELFEMARTKKACLIFFDEIDAIGGARFDDGAGGDNEVQRTMLELINQLDGFDPRGNIKVLMATNRPDTLDPALMRPGRLDRKIEFSLPDLEGRTHIFKIHARSMSVERDIRFELLARLCPNSTGAEIRSVCTEAGMFAIRARRKVATEKDFLEAVNKVIKSYAKFSATPRYMTYN.

The segment at Met1 to Arg23 is disordered. The segment covering Asp8–Arg23 has biased composition (basic and acidic residues). An ATP-binding site is contributed by Gly216 to Thr223.

The protein belongs to the AAA ATPase family. Phosphorylated. Dephosphorylated by ublcp1 which impairs psmc2 ATPase activity and disrupts 26S proteasome assembly.

The protein resides in the cytoplasm. The protein localises to the nucleus. Its function is as follows. The 26S proteasome is involved in the ATP-dependent degradation of ubiquitinated proteins. The regulatory (or ATPase) complex confers ATP dependency and substrate specificity to the 26S complex. This chain is 26S proteasome regulatory subunit 7 (psmc2), found in Xenopus laevis (African clawed frog).